A 480-amino-acid chain; its full sequence is G-rich sequence factor 1 (480 aa).

A mitochondrion-targeting transit peptide spans 1–117 (MAGTRWVLGA…AAAAVPTRSY (117 aa)). RRM domains lie at 122–246 (KTTY…SSPV) and 250–326 (GVVR…PSRR). Ser244 bears the Phosphoserine mark. Ser335 bears the Phosphoserine mark. Residues 401–480 (HFVHMRGLPF…LFLNSCPKGK (80 aa)) form the RRM 3 domain.

In terms of assembly, monomer. Found in a complex with DDX28, DHX30, FASTKD2 and FASTKD5. Interacts with the mitochondrial RNase P complex subunit TRMT10C/MRPP1. Interacts with the 2 components of the mitochondrial degradosome complex, PNPT1 and SUPV3L1, in an RNA-dependent manner.

Its subcellular location is the mitochondrion matrix. It is found in the cytoplasm. Functionally, regulator of post-transcriptional mitochondrial gene expression, required for assembly of the mitochondrial ribosome and for recruitment of mRNA and lncRNA. Binds RNAs containing the 14 base G-rich element. Preferentially binds RNAs transcribed from three contiguous genes on the light strand of mtDNA, the ND6 mRNA, and the long non-coding RNAs for MT-CYB and MT-ND5, each of which contains multiple consensus binding sequences. Involved in the degradosome-mediated decay of non-coding mitochondrial transcripts (MT-ncRNA) and tRNA-like molecules. Acts by unwinding G-quadruplex RNA structures in MT-ncRNA, thus facilitating their degradation by the degradosome. G-quadruplexes (G4) are non-canonical 4 stranded structures formed by transcripts from the light strand of mtDNA. This Homo sapiens (Human) protein is G-rich sequence factor 1 (GRSF1).